Here is a 349-residue protein sequence, read N- to C-terminus: N-acetyl-gamma-glutamyl-phosphate reductase (349 aa).

Residue C149 is part of the active site.

It belongs to the NAGSA dehydrogenase family. Type 1 subfamily.

Its subcellular location is the cytoplasm. It catalyses the reaction N-acetyl-L-glutamate 5-semialdehyde + phosphate + NADP(+) = N-acetyl-L-glutamyl 5-phosphate + NADPH + H(+). It functions in the pathway amino-acid biosynthesis; L-arginine biosynthesis; N(2)-acetyl-L-ornithine from L-glutamate: step 3/4. Functionally, catalyzes the NADPH-dependent reduction of N-acetyl-5-glutamyl phosphate to yield N-acetyl-L-glutamate 5-semialdehyde. The polypeptide is N-acetyl-gamma-glutamyl-phosphate reductase (Acinetobacter baumannii (strain SDF)).